The following is a 188-amino-acid chain: Methionine aminopeptidase (188 aa).

His-60 lines the substrate pocket. A divalent metal cation contacts are provided by Asp-80, Asp-91, and His-164. Substrate is bound at residue His-172.

This sequence belongs to the peptidase M24A family. Methionine aminopeptidase archaeal type 2 subfamily. In terms of assembly, monomer. It depends on Co(2+) as a cofactor. Requires Zn(2+) as cofactor. Mn(2+) serves as cofactor. Fe(2+) is required as a cofactor.

The catalysed reaction is Release of N-terminal amino acids, preferentially methionine, from peptides and arylamides.. In terms of biological role, removes the N-terminal methionine from nascent proteins. The N-terminal methionine is often cleaved when the second residue in the primary sequence is small and uncharged (Met-Ala-, Cys, Gly, Pro, Ser, Thr, or Val). This Methanothermus fervidus protein is Methionine aminopeptidase (map).